The chain runs to 578 residues: Ribonuclease SLFN12 (578 aa).

The residue at position 368 (Ser368) is a Phosphoserine. A mediates interaction with PDE3A region spans residues 551 to 560; the sequence is AENLYQIIGI. Ser573 is modified (phosphoserine).

This sequence belongs to the Schlafen family. Subgroup II subfamily. As to quaternary structure, homodimer. Interacts with PDE3A; direct low affinity interaction which is stimulated by binding of 17beta-estradiol/E2 to PDE3A and that positively regulates the ribonuclease activity of SLFN12. Interacts with SERPINB12; as part of a pathway regulating cell differentiation. Phosphorylation at Ser-368 and Ser-573 negatively regulates the ribonuclease activity. Dephosphorylation is induced by the interaction with PDE3A and stimulates the rRNA ribonuclease activity.

It localises to the nucleus. The protein resides in the cytoplasm. It is found in the cytosol. Ribonuclease which is part of an E2/17beta-estradiol-induced pro-apoptotic signaling pathway. E2 stabilizes the PDE3A/SLFN12 complex in the cytosol, promoting the dephosphorylation of SLFN12 and activating its pro-apoptotic ribosomal RNA/rRNA ribonuclease activity. This apoptotic pathway might be relevant in tissues with high concentration of E2 and be for instance involved in placenta remodeling. May play a role in cell differentiation. This chain is Ribonuclease SLFN12, found in Homo sapiens (Human).